Consider the following 312-residue polypeptide: GATA zinc finger domain-containing protein 20 (312 aa).

Disordered stretches follow at residues 1-45 and 213-232; these read MGKR…PQQP and TIGSSATTGDTTAIDGTNTN. Low complexity predominate over residues 29 to 45; that stretch reads QQQQQQQEQQPQQPQQP. Residues 260–287 form a GATA-type zinc finger; it reads CYVCGVTETPYWRRGTDEGVMVDLCNAC.

In Dictyostelium discoideum (Social amoeba), this protein is GATA zinc finger domain-containing protein 20 (gtaT).